A 420-amino-acid chain; its full sequence is D-tagatose-1,6-bisphosphate aldolase subunit GatZ (420 aa).

Belongs to the GatZ/KbaZ family. GatZ subfamily. In terms of assembly, forms a complex with GatY.

It participates in carbohydrate metabolism; D-tagatose 6-phosphate degradation; D-glyceraldehyde 3-phosphate and glycerone phosphate from D-tagatose 6-phosphate: step 2/2. Its function is as follows. Component of the tagatose-1,6-bisphosphate aldolase GatYZ that is required for full activity and stability of the Y subunit. Could have a chaperone-like function for the proper and stable folding of GatY. When expressed alone, GatZ does not show any aldolase activity. Is involved in the catabolism of galactitol. The chain is D-tagatose-1,6-bisphosphate aldolase subunit GatZ from Escherichia coli O6:K15:H31 (strain 536 / UPEC).